We begin with the raw amino-acid sequence, 833 residues long: Glycerol-3-phosphate acyltransferase (833 aa).

An HXXXXD motif motif is present at residues 309–314; sequence CHRSHI.

This sequence belongs to the GPAT/DAPAT family.

The protein localises to the cell inner membrane. It carries out the reaction sn-glycerol 3-phosphate + an acyl-CoA = a 1-acyl-sn-glycero-3-phosphate + CoA. It participates in phospholipid metabolism; CDP-diacylglycerol biosynthesis; CDP-diacylglycerol from sn-glycerol 3-phosphate: step 1/3. The protein is Glycerol-3-phosphate acyltransferase of Pseudomonas savastanoi pv. phaseolicola (strain 1448A / Race 6) (Pseudomonas syringae pv. phaseolicola (strain 1448A / Race 6)).